Reading from the N-terminus, the 223-residue chain is ATP synthase subunit a 2 (223 aa).

5 helical membrane passes run Val17–Cys37, Phe77–Leu97, Lys106–Val126, Phe173–Leu193, and Ile195–Ala215.

The protein belongs to the ATPase A chain family. In terms of assembly, F-type ATPases have 2 components, CF(1) - the catalytic core - and CF(0) - the membrane proton channel. CF(1) has five subunits: alpha(3), beta(3), gamma(1), delta(1), epsilon(1). CF(0) has four main subunits: a, b, b' and c.

Its subcellular location is the cell inner membrane. In terms of biological role, key component of the proton channel; it plays a direct role in the translocation of protons across the membrane. The protein is ATP synthase subunit a 2 of Bradyrhizobium sp. (strain BTAi1 / ATCC BAA-1182).